The sequence spans 125 residues: Small ribosomal subunit protein uS13 (125 aa).

It belongs to the universal ribosomal protein uS13 family. As to quaternary structure, part of the 30S ribosomal subunit. Forms a loose heterodimer with protein S19. Forms two bridges to the 50S subunit in the 70S ribosome.

Functionally, located at the top of the head of the 30S subunit, it contacts several helices of the 16S rRNA. In the 70S ribosome it contacts the 23S rRNA (bridge B1a) and protein L5 of the 50S subunit (bridge B1b), connecting the 2 subunits; these bridges are implicated in subunit movement. Contacts the tRNAs in the A and P-sites. This chain is Small ribosomal subunit protein uS13, found in Gluconobacter oxydans (strain 621H) (Gluconobacter suboxydans).